A 443-amino-acid polypeptide reads, in one-letter code: Two-pore potassium channel 2 (443 aa).

At Met-1–Thr-144 the chain is on the cytoplasmic side. Residues Ser-67–Pro-109 form a disordered region. Residues Ala-72–Thr-98 are compositionally biased toward low complexity. The chain crosses the membrane as a helical span at residues Ile-145 to Trp-165. Positions Asp-181 to Pro-200 form an intramembrane region, pore-forming. Residues Phe-208–Val-228 form a helical membrane-spanning segment. Topologically, residues Thr-229–Val-274 are cytoplasmic. Residues Gly-275–Val-295 traverse the membrane as a helical segment. An intramembrane region (pore-forming) is located at residues Asp-302–Phe-321. Residues Leu-328–Leu-348 form a helical membrane-spanning segment. The Cytoplasmic portion of the chain corresponds to Ala-349–Ile-443. EF-hand domains lie at Leu-365–Lys-400 and Lys-404–Thr-439. Asp-378, Asp-380, Asn-382, Cys-384, Glu-389, Asp-417, Ser-421, Arg-423, and Asp-428 together coordinate Ca(2+).

Belongs to the two pore domain potassium channel (TC 1.A.1.7) family. In terms of assembly, homodimer. As to expression, expressed in roots, stems, leaves and flowers.

Its subcellular location is the vacuole membrane. Its function is as follows. Probable voltage-independent potassium-selective tonoplast ion channel. The chain is Two-pore potassium channel 2 (TPK2) from Arabidopsis thaliana (Mouse-ear cress).